The chain runs to 103 residues: Urease subunit beta (103 aa).

This sequence belongs to the urease beta subunit family. Heterotrimer of UreA (gamma), UreB (beta) and UreC (alpha) subunits. Three heterotrimers associate to form the active enzyme.

It localises to the cytoplasm. It catalyses the reaction urea + 2 H2O + H(+) = hydrogencarbonate + 2 NH4(+). The protein operates within nitrogen metabolism; urea degradation; CO(2) and NH(3) from urea (urease route): step 1/1. The sequence is that of Urease subunit beta from Streptomyces coelicolor (strain ATCC BAA-471 / A3(2) / M145).